Here is a 227-residue protein sequence, read N- to C-terminus: NAD(P)H-quinone oxidoreductase subunit K, chloroplastic (227 aa).

Positions 43, 44, 108, and 139 each coordinate [4Fe-4S] cluster.

Belongs to the complex I 20 kDa subunit family. NDH is composed of at least 16 different subunits, 5 of which are encoded in the nucleus. The cofactor is [4Fe-4S] cluster.

It is found in the plastid. Its subcellular location is the chloroplast thylakoid membrane. The enzyme catalyses a plastoquinone + NADH + (n+1) H(+)(in) = a plastoquinol + NAD(+) + n H(+)(out). It catalyses the reaction a plastoquinone + NADPH + (n+1) H(+)(in) = a plastoquinol + NADP(+) + n H(+)(out). Functionally, NDH shuttles electrons from NAD(P)H:plastoquinone, via FMN and iron-sulfur (Fe-S) centers, to quinones in the photosynthetic chain and possibly in a chloroplast respiratory chain. The immediate electron acceptor for the enzyme in this species is believed to be plastoquinone. Couples the redox reaction to proton translocation, and thus conserves the redox energy in a proton gradient. This Drimys granadensis protein is NAD(P)H-quinone oxidoreductase subunit K, chloroplastic.